The following is a 220-amino-acid chain: MSTEAPLNISEIFYSIQGESSFAGWPCAFVRLAGCGHGCRYCDTTYAEEPGTAMTIDEIMHRVLAFDAPCVEVTGGEPLLQSGTFGLLSALCDRHPVVLLETGGFLPVDRVDPRVHAIIDIKAPSSGVMEHNCAANFTLALNEPERFEFKIVVASEADYLWAKSYIAGHGILGKCSIIFGPVFGQLEPRLLAEWMLRDRLPVRMQLQLHKYIWNPDARGV.

Substrate is bound by residues 16–18 and R31; that span reads IQG. A Radical SAM core domain is found at 22-215; the sequence is FAGWPCAFVR…LQLHKYIWNP (194 aa). [4Fe-4S] cluster-binding residues include C35, C39, and C42. T44 contributes to the Mg(2+) binding site. A substrate-binding site is contributed by T74. G76 contributes to the S-adenosyl-L-methionine binding site.

It belongs to the radical SAM superfamily. 7-carboxy-7-deazaguanine synthase family. As to quaternary structure, homodimer. The cofactor is [4Fe-4S] cluster. It depends on S-adenosyl-L-methionine as a cofactor. Mg(2+) is required as a cofactor.

The catalysed reaction is 6-carboxy-5,6,7,8-tetrahydropterin + H(+) = 7-carboxy-7-deazaguanine + NH4(+). It functions in the pathway purine metabolism; 7-cyano-7-deazaguanine biosynthesis. Functionally, catalyzes the complex heterocyclic radical-mediated conversion of 6-carboxy-5,6,7,8-tetrahydropterin (CPH4) to 7-carboxy-7-deazaguanine (CDG), a step common to the biosynthetic pathways of all 7-deazapurine-containing compounds. This Chlorobaculum tepidum (strain ATCC 49652 / DSM 12025 / NBRC 103806 / TLS) (Chlorobium tepidum) protein is 7-carboxy-7-deazaguanine synthase.